The chain runs to 79 residues: uncharacterized protein (79 aa).

A signal peptide spans 1-20; that stretch reads MSQLMGIITRLQSLQETAEA.

This is an uncharacterized protein from Bacillus subtilis (strain 168).